The sequence spans 171 residues: Shikimate kinase (171 aa).

14–19 lines the ATP pocket; that stretch reads GAGKST. Position 18 (Ser-18) interacts with Mg(2+). Positions 36, 60, and 82 each coordinate substrate. Arg-120 is a binding site for ATP. Arg-139 provides a ligand contact to substrate. Residue Gln-156 participates in ATP binding.

This sequence belongs to the shikimate kinase family. Monomer. Mg(2+) is required as a cofactor.

The protein resides in the cytoplasm. It carries out the reaction shikimate + ATP = 3-phosphoshikimate + ADP + H(+). It participates in metabolic intermediate biosynthesis; chorismate biosynthesis; chorismate from D-erythrose 4-phosphate and phosphoenolpyruvate: step 5/7. Its function is as follows. Catalyzes the specific phosphorylation of the 3-hydroxyl group of shikimic acid using ATP as a cosubstrate. This is Shikimate kinase from Shewanella frigidimarina (strain NCIMB 400).